A 255-amino-acid chain; its full sequence is Imidazole glycerol phosphate synthase subunit HisF (255 aa).

Catalysis depends on residues Asp11 and Asp130.

It belongs to the HisA/HisF family. Heterodimer of HisH and HisF.

It localises to the cytoplasm. It carries out the reaction 5-[(5-phospho-1-deoxy-D-ribulos-1-ylimino)methylamino]-1-(5-phospho-beta-D-ribosyl)imidazole-4-carboxamide + L-glutamine = D-erythro-1-(imidazol-4-yl)glycerol 3-phosphate + 5-amino-1-(5-phospho-beta-D-ribosyl)imidazole-4-carboxamide + L-glutamate + H(+). The protein operates within amino-acid biosynthesis; L-histidine biosynthesis; L-histidine from 5-phospho-alpha-D-ribose 1-diphosphate: step 5/9. In terms of biological role, IGPS catalyzes the conversion of PRFAR and glutamine to IGP, AICAR and glutamate. The HisF subunit catalyzes the cyclization activity that produces IGP and AICAR from PRFAR using the ammonia provided by the HisH subunit. The chain is Imidazole glycerol phosphate synthase subunit HisF from Rhodopseudomonas palustris (strain BisB5).